The following is a 196-amino-acid chain: Holliday junction branch migration complex subunit RuvA (196 aa).

Residues M1 to A63 form a domain I region. The segment at D64 to T136 is domain II. The interval T136–E140 is flexible linker. Positions S141 to P196 are domain III.

The protein belongs to the RuvA family. In terms of assembly, homotetramer. Forms an RuvA(8)-RuvB(12)-Holliday junction (HJ) complex. HJ DNA is sandwiched between 2 RuvA tetramers; dsDNA enters through RuvA and exits via RuvB. An RuvB hexamer assembles on each DNA strand where it exits the tetramer. Each RuvB hexamer is contacted by two RuvA subunits (via domain III) on 2 adjacent RuvB subunits; this complex drives branch migration. In the full resolvosome a probable DNA-RuvA(4)-RuvB(12)-RuvC(2) complex forms which resolves the HJ.

The protein resides in the cytoplasm. Functionally, the RuvA-RuvB-RuvC complex processes Holliday junction (HJ) DNA during genetic recombination and DNA repair, while the RuvA-RuvB complex plays an important role in the rescue of blocked DNA replication forks via replication fork reversal (RFR). RuvA specifically binds to HJ cruciform DNA, conferring on it an open structure. The RuvB hexamer acts as an ATP-dependent pump, pulling dsDNA into and through the RuvAB complex. HJ branch migration allows RuvC to scan DNA until it finds its consensus sequence, where it cleaves and resolves the cruciform DNA. In Acidothermus cellulolyticus (strain ATCC 43068 / DSM 8971 / 11B), this protein is Holliday junction branch migration complex subunit RuvA.